A 95-amino-acid chain; its full sequence is MSAIEQTAEGLRLRIFLQPKASRDKIIGIHDDELKIAITAPPVDGAANAHLLKYLSKAFKVPKSAIILEKGELNRHKQLFIPEPKLIPEELQPLL.

This sequence belongs to the UPF0235 family.

This Mannheimia succiniciproducens (strain KCTC 0769BP / MBEL55E) protein is UPF0235 protein MS0322.